Here is a 422-residue protein sequence, read N- to C-terminus: Gamma-glutamyl phosphate reductase (422 aa).

It belongs to the gamma-glutamyl phosphate reductase family.

Its subcellular location is the cytoplasm. It carries out the reaction L-glutamate 5-semialdehyde + phosphate + NADP(+) = L-glutamyl 5-phosphate + NADPH + H(+). It functions in the pathway amino-acid biosynthesis; L-proline biosynthesis; L-glutamate 5-semialdehyde from L-glutamate: step 2/2. Its function is as follows. Catalyzes the NADPH-dependent reduction of L-glutamate 5-phosphate into L-glutamate 5-semialdehyde and phosphate. The product spontaneously undergoes cyclization to form 1-pyrroline-5-carboxylate. This is Gamma-glutamyl phosphate reductase from Nitrosomonas europaea (strain ATCC 19718 / CIP 103999 / KCTC 2705 / NBRC 14298).